The primary structure comprises 215 residues: Ras-related protein Rab-5A (215 aa).

Positions 29, 30, 32, 33, 34, 35, 46, 47, 52, and 78 each coordinate GTP. Residue S34 participates in Mg(2+) binding. 2 short sequence motifs (switch) span residues 44-56 (QFHE…IGAA) and 77-93 (AGQE…YRGA). Position 52 (T52) interacts with Mg(2+). S84 bears the Phosphoserine mark. GTP is bound by residues N133, K134, D136, A164, and K165. The tract at residues 185-215 (EPQNPGINCTRGRGVDLTEPTQPTRSQCCSN) is disordered. Residues 203–215 (EPTQPTRSQCCSN) show a composition bias toward polar residues. Residues C212 and C213 are each lipidated (S-geranylgeranyl cysteine).

This sequence belongs to the small GTPase superfamily. Rab family. Interacts with GDI1; this promotes dissociation from membranes; phosphorylation at Ser-84 disrupts this interaction. Interacts with GDI2; phosphorylation at Ser-84 disrupts the interaction. Interacts with SGSM1 and SGSM3. Interacts with PIK3CB. Interacts with RIN1 and GAPVD1, which regulate its pathway, probably by acting as a GEF. Interacts with RINL. Interacts with ALS2CL, SUN2, ZFYVE20 and RUFY1. Interacts with RABEP1; one RABEP1 homodimer binds two RAB5A chains, but at opposite sides of the dimer. Interacts with OCRL and INPP5F. May be a component of a complex composed of RAB5A, DYN2 and PIK3C3. Does not interact with the BLOC-3 complex (heterodimer of HPS1 and HPS4). Interacts with CLN5. Interacts with APPL2. Interacts with F8A1/F8A2/F8A3. Found in a complex with F8A1/F8A2/F8A3, HTT and RAB5A; mediates the recruitment of HTT by RAB5A onto early endosomes. Interacts with ATP9A. Interacts with PPP1R21; mediates the recruitment of FERRY complex by RAB5A onto early endosomes. It depends on Mg(2+) as a cofactor. In terms of processing, phosphorylation of Ser-84 in the switch II region by LRRK2 prevents the association of RAB regulatory proteins, including RAB GDP dissociation inhibitors GDI1 and GDI2.

Its subcellular location is the cell membrane. The protein resides in the early endosome membrane. The protein localises to the melanosome. It is found in the cytoplasmic vesicle. It localises to the cell projection. Its subcellular location is the ruffle. The protein resides in the membrane. The protein localises to the cytoplasm. It is found in the cytosol. It localises to the phagosome membrane. Its subcellular location is the endosome membrane. It catalyses the reaction GTP + H2O = GDP + phosphate + H(+). With respect to regulation, regulated by guanine nucleotide exchange factors (GEFs) including RINL, which promote the exchange of bound GDP for free GTP. Regulated by GTPase activating proteins (GAPs) which increase the GTP hydrolysis activity. Inhibited by GDP dissociation inhibitors (GDIs). The small GTPases Rab are key regulators of intracellular membrane trafficking, from the formation of transport vesicles to their fusion with membranes. Rabs cycle between an inactive GDP-bound form and an active GTP-bound form that is able to recruit to membranes different sets of downstream effectors directly responsible for vesicle formation, movement, tethering and fusion. RAB5A is required for the fusion of plasma membranes and early endosomes. Contributes to the regulation of filopodia extension. Required for the exosomal release of SDCBP, CD63, PDCD6IP and syndecan. Regulates maturation of apoptotic cell-containing phagosomes, probably downstream of DYN2 and PIK3C3. This chain is Ras-related protein Rab-5A (RAB5A), found in Sus scrofa (Pig).